Reading from the N-terminus, the 321-residue chain is Lipoyl synthase (321 aa).

[4Fe-4S] cluster is bound by residues C68, C73, C79, C94, C98, C101, and S308. A Radical SAM core domain is found at 80–297 (FNHGTATFMI…KVIAEDLGFS (218 aa)).

Belongs to the radical SAM superfamily. Lipoyl synthase family. It depends on [4Fe-4S] cluster as a cofactor.

The protein resides in the cytoplasm. The catalysed reaction is [[Fe-S] cluster scaffold protein carrying a second [4Fe-4S](2+) cluster] + N(6)-octanoyl-L-lysyl-[protein] + 2 oxidized [2Fe-2S]-[ferredoxin] + 2 S-adenosyl-L-methionine + 4 H(+) = [[Fe-S] cluster scaffold protein] + N(6)-[(R)-dihydrolipoyl]-L-lysyl-[protein] + 4 Fe(3+) + 2 hydrogen sulfide + 2 5'-deoxyadenosine + 2 L-methionine + 2 reduced [2Fe-2S]-[ferredoxin]. Its pathway is protein modification; protein lipoylation via endogenous pathway; protein N(6)-(lipoyl)lysine from octanoyl-[acyl-carrier-protein]: step 2/2. Catalyzes the radical-mediated insertion of two sulfur atoms into the C-6 and C-8 positions of the octanoyl moiety bound to the lipoyl domains of lipoate-dependent enzymes, thereby converting the octanoylated domains into lipoylated derivatives. This is Lipoyl synthase from Shewanella amazonensis (strain ATCC BAA-1098 / SB2B).